We begin with the raw amino-acid sequence, 398 residues long: ATP-dependent RNA helicase eIF4A (398 aa).

The Q motif motif lies at 25 to 53 (DSFDAMNLRAELLRGVYAYGFERPSAIQQ). One can recognise a Helicase ATP-binding domain in the interval 56 to 226 (IMPVIKGSDV…TKFMRDPVRI (171 aa)). 69–76 (AQSGTGKT) is an ATP binding site. The short motif at 174-177 (DEAD) is the DEAD box element. A Helicase C-terminal domain is found at 237 to 398 (GIKQFYIAVE…EMPMNVADLI (162 aa)).

Belongs to the DEAD box helicase family. eIF4A subfamily. Component of the eIF4F complex, which composition varies with external and internal environmental conditions. It is composed of at least eIF4A, eIF4E and eIF4G.

The protein localises to the cytoplasm. It carries out the reaction ATP + H2O = ADP + phosphate + H(+). ATP-dependent RNA helicase which is a subunit of the eIF4F complex involved in cap recognition and is required for mRNA binding to ribosome. In the current model of translation initiation, eIF4A unwinds RNA secondary structures in the 5'-UTR of mRNAs which is necessary to allow efficient binding of the small ribosomal subunit, and subsequent scanning for the initiator codon. This Coccidioides immitis (strain RS) (Valley fever fungus) protein is ATP-dependent RNA helicase eIF4A (TIF1).